The following is a 507-amino-acid chain: Histidine ammonia-lyase (507 aa).

Positions 141–143 (ASG) form a cross-link, 5-imidazolinone (Ala-Gly). Ser-142 bears the 2,3-didehydroalanine (Ser) mark.

The protein belongs to the PAL/histidase family. Contains an active site 4-methylidene-imidazol-5-one (MIO), which is formed autocatalytically by cyclization and dehydration of residues Ala-Ser-Gly.

Its subcellular location is the cytoplasm. The catalysed reaction is L-histidine = trans-urocanate + NH4(+). The protein operates within amino-acid degradation; L-histidine degradation into L-glutamate; N-formimidoyl-L-glutamate from L-histidine: step 1/3. This Burkholderia mallei (strain NCTC 10247) protein is Histidine ammonia-lyase.